Here is a 535-residue protein sequence, read N- to C-terminus: T-box transcription factor TBX21 (535 aa).

The segment at 1–62 (MGIVEPGCGD…SLGSPYPGGA (62 aa)) is disordered. Ser53 carries the phosphoserine modification. Tyr77 is modified (phosphotyrosine). The interval 83 to 109 (AAGFPGAGESFPPPADAEGYQPGEGYA) is disordered. At Tyr118 the chain carries Phosphotyrosine. Residues 141–326 (LNNHLLWSKF…NNPFAKGFRE (186 aa)) constitute a DNA-binding region (T-box). Phosphotyrosine; by ABL1 is present on Tyr220. At Ser225 the chain carries Phosphoserine. Position 266 is a phosphotyrosine; by ABL1 (Tyr266). Thr303 carries the phosphothreonine modification. Phosphotyrosine; by ABL1 is present on Tyr305. Lys314 is covalently cross-linked (Glycyl lysine isopeptide (Lys-Gly) (interchain with G-Cter in ubiquitin)). The disordered stretch occupies residues 449–535 (RPMRTLPMEP…EGQFYNYFPN (87 aa)). The segment covering 503–520 (SPYPSSGDSSSPAGAPSP) has biased composition (low complexity). Ser513 carries the post-translational modification Phosphoserine. The residue at position 530 (Tyr530) is a Phosphotyrosine; by ITK.

As to quaternary structure, interacts with RUNX1, RUNX3, ITK, ABL1, RELA, CDK9 and KDM6B. The phosphorylated form (at Thr-303) interacts with NFATC2. Interacts with SMARCA4 in a KDM6B-dependent manner. Interacts with CCTN1. Interacts with USP10. The phosphorylated form (at Tyr-530) interacts with GATA3. Post-translationally, phosphorylations at Ser-53, Tyr-77, Ser-225 and Ser-513 are regulated by mTORC1. Phosphorylation at Tyr-530 is essential for its interaction GATA3. Phosphorylation at Tyr-220, Tyr-266 and Tyr-305 enhances its transcriptional activator activity. Phosphorylation at Thr-303 is required for its interaction with NFATC2. In terms of processing, ubiquitinated at Lys-314, leading to its degradation by the proteasome. Ubiquitination is essential for controlling protein stability, binding to the T-box-binding element of the IFN-gamma promoter, and for interaction with NFATC2 through induction of phosphorylation at Thr-303. Deubiquitinated by USP10 leading to its stabilization. As to expression, T-cell specific.

Its subcellular location is the nucleus. Lineage-defining transcription factor which initiates Th1 lineage development from naive Th precursor cells both by activating Th1 genetic programs and by repressing the opposing Th2 and Th17 genetic programs. Activates transcription of a set of genes important for Th1 cell function, including those encoding IFN-gamma and the chemokine receptor CXCR3. Induces permissive chromatin accessibilty and CpG methylation in IFNG. Activates IFNG and CXCR3 genes in part by recruiting chromatin remodeling complexes including KDM6B, a SMARCA4-containing SWI/SNF-complex, and an H3K4me2-methyltransferase complex to their promoters and all of these complexes serve to establish a more permissive chromatin state conducive with transcriptional activation. Can activate Th1 genes also via recruitment of Mediator complex and P-TEFb (composed of CDK9 and CCNT1/cyclin-T1) in the form of the super elongation complex (SEC) to super-enhancers and associated genes in activated Th1 cells. Inhibits the Th17 cell lineage commitment by blocking RUNX1-mediated transactivation of Th17 cell-specific transcriptinal regulator RORC. Inhibits the Th2 cell lineage commitment by suppressing the production of Th2 cytokines, such as IL-4, IL-5, and IL- 13, via repression of transcriptional regulators GATA3 and NFATC2. Protects Th1 cells from amplifying aberrant type-I IFN response in an IFN-gamma abundant microenvironment by acting as a repressor of type-I IFN transcription factors and type-I IFN-stimulated genes. Acts as a regulator of antiviral B-cell responses; controls chronic viral infection by promoting the antiviral antibody IgG2a isotype switching and via regulation of a broad antiviral gene expression program. Required for the correct development of natural killer (NK) and mucosal-associated invariant T (MAIT) cells. The protein is T-box transcription factor TBX21 (TBX21) of Homo sapiens (Human).